Consider the following 89-residue polypeptide: Acylphosphatase (89 aa).

In terms of domain architecture, Acylphosphatase-like spans 3 to 89; sequence ALFIKISGRV…QNFTSFDIVP (87 aa). Active-site residues include arginine 18 and asparagine 36.

This sequence belongs to the acylphosphatase family.

The catalysed reaction is an acyl phosphate + H2O = a carboxylate + phosphate + H(+). The chain is Acylphosphatase (acyP) from Pseudothermotoga lettingae (strain ATCC BAA-301 / DSM 14385 / NBRC 107922 / TMO) (Thermotoga lettingae).